Consider the following 494-residue polypeptide: Glutamate--tRNA ligase (494 aa).

A 'HIGH' region motif is present at residues 10-20; it reads PSPTGDPHVGT. Residues Cys-107, Cys-109, Cys-134, and His-136 each contribute to the Zn(2+) site. A 'KMSKS' region motif is present at residues 251–255; sequence KLSKR. Lys-254 contacts ATP.

It belongs to the class-I aminoacyl-tRNA synthetase family. Glutamate--tRNA ligase type 1 subfamily. As to quaternary structure, monomer. The cofactor is Zn(2+).

Its subcellular location is the cytoplasm. It carries out the reaction tRNA(Glu) + L-glutamate + ATP = L-glutamyl-tRNA(Glu) + AMP + diphosphate. Its function is as follows. Catalyzes the attachment of glutamate to tRNA(Glu) in a two-step reaction: glutamate is first activated by ATP to form Glu-AMP and then transferred to the acceptor end of tRNA(Glu). In Pseudomonas aeruginosa (strain ATCC 15692 / DSM 22644 / CIP 104116 / JCM 14847 / LMG 12228 / 1C / PRS 101 / PAO1), this protein is Glutamate--tRNA ligase.